Here is a 71-residue protein sequence, read N- to C-terminus: uncharacterized protein (71 aa).

Residues 24 to 44 (FGGGGLSTAIYSIFAFFSIPL) form a helical membrane-spanning segment.

The protein resides in the membrane. This is an uncharacterized protein from Schizosaccharomyces pombe (strain 972 / ATCC 24843) (Fission yeast).